We begin with the raw amino-acid sequence, 290 residues long: uncharacterized protein (290 aa).

5 helical membrane passes run 10–27 (FFVA…LLLI), 32–54 (VNYI…YFFS), 69–91 (ILVP…GVLI), 100–117 (VLAG…FFYF), and 121–143 (YLLM…NFEY). A coiled-coil region spans residues 147 to 183 (VGKERKRILKLKKNYHKLLKEFSNFEREKRMFSNLRK).

It localises to the cell membrane. This is an uncharacterized protein from Aquifex aeolicus (strain VF5).